A 315-amino-acid chain; its full sequence is Calumenin (315 aa).

Positions 1 to 19 (MNKRPLLLCLGLWVACTLS) are cleaved as a signal peptide. EF-hand domains follow at residues 68–103 (ESKE…AQKK), 104–139 (YVYD…TYLD), 151–186 (QMMI…EEFD), 188–223 (MKDI…HDGD), 229–264 (WVKT…SDYD), and 265–300 (HSEA…FVGS). 9 residues coordinate Ca(2+): D81, D83, D85, Y87, E92, D117, S119, D121, and E128. N131 carries N-linked (GlcNAc...) asparagine glycosylation. Positions 164, 166, 168, 175, 201, 203, 205, 212, 242, 244, 246, 248, 253, 278, 280, 282, 284, and 289 each coordinate Ca(2+). The short motif at 312-315 (HDEF) is the Prevents secretion from ER element.

The protein belongs to the CREC family. In terms of assembly, interacts with ggcx.

Its subcellular location is the endoplasmic reticulum membrane. It localises to the golgi apparatus. The protein resides in the secreted. It is found in the melanosome. The protein localises to the sarcoplasmic reticulum lumen. Its function is as follows. Involved in regulation of vitamin K-dependent carboxylation of multiple N-terminal glutamate residues. Seems to inhibit gamma-carboxylase ggcx. Binds 7 calcium ions with a low affinity. The polypeptide is Calumenin (calu) (Xenopus laevis (African clawed frog)).